We begin with the raw amino-acid sequence, 619 residues long: Dihydroxy-acid dehydratase (619 aa).

Asp81 provides a ligand contact to Mg(2+). [2Fe-2S] cluster is bound at residue Cys122. Mg(2+)-binding residues include Asp123 and Lys124. The residue at position 124 (Lys124) is an N6-carboxylysine. Cys198 contacts [2Fe-2S] cluster. Position 494 (Glu494) interacts with Mg(2+). The active-site Proton acceptor is the Ser520.

This sequence belongs to the IlvD/Edd family. Homodimer. Requires [2Fe-2S] cluster as cofactor. The cofactor is Mg(2+).

It carries out the reaction (2R)-2,3-dihydroxy-3-methylbutanoate = 3-methyl-2-oxobutanoate + H2O. The enzyme catalyses (2R,3R)-2,3-dihydroxy-3-methylpentanoate = (S)-3-methyl-2-oxopentanoate + H2O. It functions in the pathway amino-acid biosynthesis; L-isoleucine biosynthesis; L-isoleucine from 2-oxobutanoate: step 3/4. The protein operates within amino-acid biosynthesis; L-valine biosynthesis; L-valine from pyruvate: step 3/4. Functionally, functions in the biosynthesis of branched-chain amino acids. Catalyzes the dehydration of (2R,3R)-2,3-dihydroxy-3-methylpentanoate (2,3-dihydroxy-3-methylvalerate) into 2-oxo-3-methylpentanoate (2-oxo-3-methylvalerate) and of (2R)-2,3-dihydroxy-3-methylbutanoate (2,3-dihydroxyisovalerate) into 2-oxo-3-methylbutanoate (2-oxoisovalerate), the penultimate precursor to L-isoleucine and L-valine, respectively. This Neisseria meningitidis serogroup C / serotype 2a (strain ATCC 700532 / DSM 15464 / FAM18) protein is Dihydroxy-acid dehydratase.